We begin with the raw amino-acid sequence, 153 residues long: Endoribonuclease YbeY (153 aa).

3 residues coordinate Zn(2+): H114, H118, and H124.

It belongs to the endoribonuclease YbeY family. Requires Zn(2+) as cofactor.

The protein localises to the cytoplasm. In terms of biological role, single strand-specific metallo-endoribonuclease involved in late-stage 70S ribosome quality control and in maturation of the 3' terminus of the 16S rRNA. The chain is Endoribonuclease YbeY from Shewanella denitrificans (strain OS217 / ATCC BAA-1090 / DSM 15013).